A 435-amino-acid polypeptide reads, in one-letter code: Diguanylate cyclase TpbB (435 aa).

Residues 1–22 (MNRRRRYTGSNPSLRRVLYRAH) are Cytoplasmic-facing. A helical transmembrane segment spans residues 23 to 43 (LGVALVAVFTAGLAVTLVGLL). The Periplasmic segment spans residues 44–154 (TLRAYADPNQ…VKGSGGSLLR (111 aa)). Residues 155-175 (FLLTGFAGMVLCLLLTALGAF) form a helical membrane-spanning segment. The Cytoplasmic portion of the chain corresponds to 176 to 435 (YLSRRLVRGI…DSATPEAPPK (260 aa)). The HAMP domain occupies 183–236 (RGIVGPLDQLAKVAHTVRRERDFEKRVPEAGIAELSQLGEDFNALLDELESWQA). One can recognise a GGDEF domain in the interval 279–415 (EQLAVLFIDS…GSRRLAELND (137 aa)). Mg(2+)-binding residues include Ser-288 and Asp-330. The Proton acceptor role is filled by Asp-330. Residues 413 to 426 (LNDPRILQEEKEID) show a composition bias toward basic and acidic residues. The interval 413-435 (LNDPRILQEEKEIDSATPEAPPK) is disordered.

As to quaternary structure, homodimer. Interacts with YfiR. It depends on Mg(2+) as a cofactor. Phosphorylated at both Tyr residues and Ser/Thr residues. Dephosphorylated and inactivated by TpbA.

It is found in the cell inner membrane. The catalysed reaction is 2 GTP = 3',3'-c-di-GMP + 2 diphosphate. It participates in purine metabolism; 3',5'-cyclic di-GMP biosynthesis. Its activity is regulated as follows. Activity is tightly controlled by YfiR, a small periplasmic protein, and the OmpA/Pal-like outer-membrane lipoprotein YfiB. Diguanylate cyclase activity is inhibited by the specific interaction of YfiR with the TpbB periplasmic domain and is activated by YfiB, which releases the YfiR-mediated repression through sequestration of YfiR to the outer membrane. Release of repression leads to a conformational shift in TpbB/YfiN that propagates through the PAS and transmembrane domains to switch the cytoplasmic HAMP domain from an inactive to an active conformation and activate the C-terminal catalytic GGDEF domain. Thus, TpbB/YfiN appears to function by switching between discrete inactive and active functional states depending on the presence or absence of bound YfiR. Activity is also controlled by dephosphorylation of the periplasmic domain by the tyrosine phosphatase TpbA. These two mechanisms of regulation could in principle work in parallel or as part of the same regulatory pathway. Does not undergo product feedback inhibition. Catalyzes the synthesis of cyclic-di-GMP (c-di-GMP) via the condensation of 2 GTP molecules. Its function is as follows. Part of the YfiB-TpbB-YfiR (or yfiBNR) system, encoding a tripartite signaling module that modulates intracellular c-di-GMP levels. The system is a key regulator of the small colony variant (SCV) phenotype, and plays an important role in biofilm formation and in vivo persistence. The c-di-GMP produced by TpbB/YfiN stimulates the production of the Pel and Psl exopolysaccharides, which promotes surface attachment, generates an SCV phenotype and confers resistance against phagocytosis. The chain is Diguanylate cyclase TpbB from Pseudomonas aeruginosa (strain ATCC 15692 / DSM 22644 / CIP 104116 / JCM 14847 / LMG 12228 / 1C / PRS 101 / PAO1).